The primary structure comprises 489 residues: Type II restriction enzyme Sau3AI (489 aa).

The cofactor is Mg(2+).

The enzyme catalyses Endonucleolytic cleavage of DNA to give specific double-stranded fragments with terminal 5'-phosphates.. In terms of biological role, an E and P subtype restriction enzyme that recognizes the double-stranded sequence 5'-GATC-3' and cleaves before G-1. The polypeptide is Type II restriction enzyme Sau3AI (sau3AIR) (Staphylococcus aureus).